The following is a 719-amino-acid chain: Photosystem I P700 chlorophyll a apoprotein A1 (719 aa).

8 helical membrane-spanning segments follow: residues Ile60–Ala83, Leu146–His169, Leu185–Leu209, Thr281–Tyr299, Trp336–Tyr359, Leu375–Val401, Ala423–His445, and Phe521–Leu539. [4Fe-4S] cluster contacts are provided by Cys563 and Cys572. Transmembrane regions (helical) follow at residues His579–Trp600 and Leu654–Phe676. A chlorophyll a'-binding site is contributed by His665. Residues Met673 and Tyr681 each contribute to the chlorophyll a site. Phylloquinone is bound at residue Trp682. A helical membrane pass occupies residues Ala714–His719.

This sequence belongs to the PsaA/PsaB family. In terms of assembly, the PsaA/B heterodimer binds the P700 chlorophyll special pair and subsequent electron acceptors. PSI consists of a core antenna complex that captures photons, and an electron transfer chain that converts photonic excitation into a charge separation. The eukaryotic PSI reaction center is composed of at least 11 subunits. P700 is a chlorophyll a/chlorophyll a' dimer, A0 is one or more chlorophyll a, A1 is one or both phylloquinones and FX is a shared 4Fe-4S iron-sulfur center. is required as a cofactor.

The protein localises to the plastid. It is found in the chloroplast thylakoid membrane. It carries out the reaction reduced [plastocyanin] + hnu + oxidized [2Fe-2S]-[ferredoxin] = oxidized [plastocyanin] + reduced [2Fe-2S]-[ferredoxin]. Its function is as follows. PsaA and PsaB bind P700, the primary electron donor of photosystem I (PSI), as well as the electron acceptors A0, A1 and FX. PSI is a plastocyanin-ferredoxin oxidoreductase, converting photonic excitation into a charge separation, which transfers an electron from the donor P700 chlorophyll pair to the spectroscopically characterized acceptors A0, A1, FX, FA and FB in turn. Oxidized P700 is reduced on the lumenal side of the thylakoid membrane by plastocyanin. The chain is Photosystem I P700 chlorophyll a apoprotein A1 from Equisetum palustre (Marsh horsetail).